Consider the following 186-residue polypeptide: Ribosome-recycling factor (186 aa).

The protein belongs to the RRF family.

The protein resides in the cytoplasm. Functionally, responsible for the release of ribosomes from messenger RNA at the termination of protein biosynthesis. May increase the efficiency of translation by recycling ribosomes from one round of translation to another. The chain is Ribosome-recycling factor from Chlorobium limicola (strain DSM 245 / NBRC 103803 / 6330).